The chain runs to 161 residues: Phosphopantetheine adenylyltransferase (161 aa).

Thr-10 serves as a coordination point for substrate. Residues Thr-10–Phe-11 and His-18 each bind ATP. Positions 42, 74, and 88 each coordinate substrate. Residues Gly-89–Arg-91, Glu-99, and Tyr-123–Thr-129 contribute to the ATP site.

The protein belongs to the bacterial CoaD family. Homohexamer. The cofactor is Mg(2+).

It localises to the cytoplasm. It catalyses the reaction (R)-4'-phosphopantetheine + ATP + H(+) = 3'-dephospho-CoA + diphosphate. It functions in the pathway cofactor biosynthesis; coenzyme A biosynthesis; CoA from (R)-pantothenate: step 4/5. Functionally, reversibly transfers an adenylyl group from ATP to 4'-phosphopantetheine, yielding dephospho-CoA (dPCoA) and pyrophosphate. In Aquifex aeolicus (strain VF5), this protein is Phosphopantetheine adenylyltransferase.